Reading from the N-terminus, the 37-residue chain is Large ribosomal subunit protein bL36A (37 aa).

It belongs to the bacterial ribosomal protein bL36 family.

The chain is Large ribosomal subunit protein bL36A from Haemophilus ducreyi (strain 35000HP / ATCC 700724).